Reading from the N-terminus, the 268-residue chain is Phosphatidylglycerol--prolipoprotein diacylglyceryl transferase (268 aa).

The next 7 membrane-spanning stretches (helical) occupy residues 27-47 (PALR…MWLL), 66-86 (LLFY…VLFY), 104-124 (GGMS…YIAW), 130-150 (FFAV…AGRI), 181-201 (PSQL…LYWF), 208-228 (VGAV…IVET), and 242-262 (FMTM…YLIL). Arginine 149 contacts a 1,2-diacyl-sn-glycero-3-phospho-(1'-sn-glycerol).

The protein belongs to the Lgt family.

Its subcellular location is the cell inner membrane. The catalysed reaction is L-cysteinyl-[prolipoprotein] + a 1,2-diacyl-sn-glycero-3-phospho-(1'-sn-glycerol) = an S-1,2-diacyl-sn-glyceryl-L-cysteinyl-[prolipoprotein] + sn-glycerol 1-phosphate + H(+). Its pathway is protein modification; lipoprotein biosynthesis (diacylglyceryl transfer). Functionally, catalyzes the transfer of the diacylglyceryl group from phosphatidylglycerol to the sulfhydryl group of the N-terminal cysteine of a prolipoprotein, the first step in the formation of mature lipoproteins. In Shewanella sp. (strain ANA-3), this protein is Phosphatidylglycerol--prolipoprotein diacylglyceryl transferase.